Consider the following 106-residue polypeptide: ATP-dependent Clp protease adapter protein ClpS (106 aa).

Positions 1–13 (MPRKTSHEHDHGL) are enriched in basic and acidic residues. A disordered region spans residues 1-21 (MPRKTSHEHDHGLVVETSKPE).

Belongs to the ClpS family. Binds to the N-terminal domain of the chaperone ClpA.

Functionally, involved in the modulation of the specificity of the ClpAP-mediated ATP-dependent protein degradation. This chain is ATP-dependent Clp protease adapter protein ClpS, found in Xanthomonas campestris pv. campestris (strain 8004).